Consider the following 124-residue polypeptide: Small ribosomal subunit protein uS12 (124 aa).

Asp-89 bears the 3-methylthioaspartic acid mark.

Belongs to the universal ribosomal protein uS12 family. In terms of assembly, part of the 30S ribosomal subunit. Contacts proteins S8 and S17. May interact with IF1 in the 30S initiation complex.

In terms of biological role, with S4 and S5 plays an important role in translational accuracy. Interacts with and stabilizes bases of the 16S rRNA that are involved in tRNA selection in the A site and with the mRNA backbone. Located at the interface of the 30S and 50S subunits, it traverses the body of the 30S subunit contacting proteins on the other side and probably holding the rRNA structure together. The combined cluster of proteins S8, S12 and S17 appears to hold together the shoulder and platform of the 30S subunit. The chain is Small ribosomal subunit protein uS12 from Koribacter versatilis (strain Ellin345).